The following is a 211-amino-acid chain: Octanoyltransferase (211 aa).

Residues 28-203 (GSAPETLLLV…HFQSLLKTWL (176 aa)) enclose the BPL/LPL catalytic domain. Substrate contacts are provided by residues 66 to 73 (RGGDITYH), 133 to 135 (SIG), and 146 to 148 (GFA). Cysteine 164 functions as the Acyl-thioester intermediate in the catalytic mechanism.

Belongs to the LipB family.

The protein localises to the cytoplasm. It carries out the reaction octanoyl-[ACP] + L-lysyl-[protein] = N(6)-octanoyl-L-lysyl-[protein] + holo-[ACP] + H(+). Its pathway is protein modification; protein lipoylation via endogenous pathway; protein N(6)-(lipoyl)lysine from octanoyl-[acyl-carrier-protein]: step 1/2. Its function is as follows. Catalyzes the transfer of endogenously produced octanoic acid from octanoyl-acyl-carrier-protein onto the lipoyl domains of lipoate-dependent enzymes. Lipoyl-ACP can also act as a substrate although octanoyl-ACP is likely to be the physiological substrate. The polypeptide is Octanoyltransferase (Syntrophotalea carbinolica (strain DSM 2380 / NBRC 103641 / GraBd1) (Pelobacter carbinolicus)).